A 162-amino-acid polypeptide reads, in one-letter code: Onchocystatin (162 aa).

An N-terminal signal peptide occupies residues 1–32 (MLTIKDGTLLIHLLLFSVVALVQLQGAKSARA). The tract at residues 30-54 (ARAKNPSKMESKTGENQDRPVLLGG) is disordered. Positions 36 to 47 (SKMESKTGENQD) are enriched in basic and acidic residues. Positions 97 to 101 (QVVAG) match the Secondary area of contact motif. Cysteines 115 and 128 form a disulfide.

This sequence belongs to the cystatin family. In terms of tissue distribution, expressed in the cuticle of L3 and L4 larvae, female adult, and in the eggshell of developing microfilariae.

Cysteine protease inhibitor which inhibits members of the peptidase C1 family. In the human host, inhibits CTSL/cathepsin L and CTSS/cathepsin S and to a lesser extent CTSB/cathepsin B which may cause defects in antigen processing and thereby impair antigen-driven T cell proliferation. This Onchocerca volvulus protein is Onchocystatin.